A 1333-amino-acid polypeptide reads, in one-letter code: DNA-directed RNA polymerase subunit beta' (1333 aa).

Zn(2+) is bound by residues cysteine 60, cysteine 62, cysteine 75, and cysteine 78. Aspartate 535, aspartate 537, and aspartate 539 together coordinate Mg(2+). Residues cysteine 901, cysteine 983, cysteine 990, and cysteine 993 each contribute to the Zn(2+) site.

It belongs to the RNA polymerase beta' chain family. As to quaternary structure, the RNAP catalytic core consists of 2 alpha, 1 beta, 1 beta' and 1 omega subunit. When a sigma factor is associated with the core the holoenzyme is formed, which can initiate transcription. Requires Mg(2+) as cofactor. Zn(2+) serves as cofactor.

It carries out the reaction RNA(n) + a ribonucleoside 5'-triphosphate = RNA(n+1) + diphosphate. In terms of biological role, DNA-dependent RNA polymerase catalyzes the transcription of DNA into RNA using the four ribonucleoside triphosphates as substrates. This Corynebacterium glutamicum (strain ATCC 13032 / DSM 20300 / JCM 1318 / BCRC 11384 / CCUG 27702 / LMG 3730 / NBRC 12168 / NCIMB 10025 / NRRL B-2784 / 534) protein is DNA-directed RNA polymerase subunit beta'.